Reading from the N-terminus, the 461-residue chain is tRNA modification GTPase MnmE (461 aa).

Positions 21, 87, and 126 each coordinate (6S)-5-formyl-5,6,7,8-tetrahydrofolate. The region spanning 222-384 is the TrmE-type G domain; that stretch reads QSTVVLYGEP…LLELLKSKLT (163 aa). Asn-232 contacts K(+). Residues 232 to 237, 251 to 257, and 276 to 279 each bind GTP; these read NTGKSS, SDVPGTT, and DTAG. Position 236 (Ser-236) interacts with Mg(2+). Ser-251, Val-253, and Thr-256 together coordinate K(+). Thr-257 is a binding site for Mg(2+). Lys-461 lines the (6S)-5-formyl-5,6,7,8-tetrahydrofolate pocket.

The protein belongs to the TRAFAC class TrmE-Era-EngA-EngB-Septin-like GTPase superfamily. TrmE GTPase family. As to quaternary structure, homodimer. Heterotetramer of two MnmE and two MnmG subunits. Requires K(+) as cofactor.

It is found in the cytoplasm. Functionally, exhibits a very high intrinsic GTPase hydrolysis rate. Involved in the addition of a carboxymethylaminomethyl (cmnm) group at the wobble position (U34) of certain tRNAs, forming tRNA-cmnm(5)s(2)U34. The polypeptide is tRNA modification GTPase MnmE (Leptospira biflexa serovar Patoc (strain Patoc 1 / Ames)).